The primary structure comprises 79 residues: Beta-defensin 130 (79 aa).

An N-terminal signal peptide occupies residues 1–22 (MKLHSLISVLLLFVTLIPKGKT). Intrachain disulfides connect Cys38/Cys53 and Cys43/Cys60.

This sequence belongs to the beta-defensin family.

It is found in the secreted. In terms of biological role, antimicrobial host-defense peptide. In Pan troglodytes (Chimpanzee), this protein is Beta-defensin 130.